Consider the following 20-residue polypeptide: Peroxidase 1 (20 aa).

Position 14 (H14) interacts with heme. T15 lines the Ca(2+) pocket.

This sequence belongs to the peroxidase family. Classical plant (class III) peroxidase subfamily. Ca(2+) serves as cofactor. Heme b is required as a cofactor.

Its subcellular location is the secreted. It catalyses the reaction 2 a phenolic donor + H2O2 = 2 a phenolic radical donor + 2 H2O. Removal of H(2)O(2), oxidation of toxic reductants, biosynthesis and degradation of lignin, suberization, auxin catabolism, response to environmental stresses such as wounding, pathogen attack and oxidative stress. These functions might be dependent on each isozyme/isoform in each plant tissue. The polypeptide is Peroxidase 1 (Betula pendula (European white birch)).